A 657-amino-acid polypeptide reads, in one-letter code: UvrABC system protein B (657 aa).

The Helicase ATP-binding domain maps to 25–182 (NSIKSNNRAQ…KKLIEIQYER (158 aa)). 38–45 (GVTGSGKT) is an ATP binding site. The Beta-hairpin signature appears at 91-114 (YYDYYQPEAYVPQTDTFIEKDASI). The Helicase C-terminal domain maps to 429–595 (QIDDLYGEIN…TIIKDVRDII (167 aa)). A UVR domain is found at 621–656 (DKLIKDLTEEMLLAAKNLQFERAAELRDIINEIKDG).

Belongs to the UvrB family. As to quaternary structure, forms a heterotetramer with UvrA during the search for lesions. Interacts with UvrC in an incision complex.

The protein resides in the cytoplasm. Its function is as follows. The UvrABC repair system catalyzes the recognition and processing of DNA lesions. A damage recognition complex composed of 2 UvrA and 2 UvrB subunits scans DNA for abnormalities. Upon binding of the UvrA(2)B(2) complex to a putative damaged site, the DNA wraps around one UvrB monomer. DNA wrap is dependent on ATP binding by UvrB and probably causes local melting of the DNA helix, facilitating insertion of UvrB beta-hairpin between the DNA strands. Then UvrB probes one DNA strand for the presence of a lesion. If a lesion is found the UvrA subunits dissociate and the UvrB-DNA preincision complex is formed. This complex is subsequently bound by UvrC and the second UvrB is released. If no lesion is found, the DNA wraps around the other UvrB subunit that will check the other stand for damage. This Clostridium beijerinckii (strain ATCC 51743 / NCIMB 8052) (Clostridium acetobutylicum) protein is UvrABC system protein B.